The primary structure comprises 81 residues: Toxin F-VIII (81 aa).

Residues M1–T21 form the signal peptide. 4 disulfide bridges follow: C24/C43, C38/C60, C62/C73, and C74/C79.

The protein belongs to the three-finger toxin family. Short-chain subfamily. Orphan group XI sub-subfamily. Expressed by the venom gland.

The protein resides in the secreted. In terms of biological role, is cytotoxic against A549 cells (LC(50)=106 ug/ml). This chain is Toxin F-VIII, found in Dendroaspis angusticeps (Eastern green mamba).